Consider the following 64-residue polypeptide: Metallothionein (64 aa).

It belongs to the metallothionein superfamily. Type 4 family.

Its function is as follows. Metallothioneins have a high content of cysteine residues that bind various heavy metals. The protein is Metallothionein of Sterechinus neumayeri (Antarctic sea urchin).